Reading from the N-terminus, the 165-residue chain is Putative 4-hydroxy-4-methyl-2-oxoglutarate aldolase (165 aa).

Residues 80–83 and arginine 102 contribute to the substrate site; that span reads GGNL. Residue aspartate 103 coordinates a divalent metal cation.

This sequence belongs to the class II aldolase/RraA-like family. In terms of assembly, homotrimer. The cofactor is a divalent metal cation.

The catalysed reaction is 4-hydroxy-4-methyl-2-oxoglutarate = 2 pyruvate. It catalyses the reaction oxaloacetate + H(+) = pyruvate + CO2. Functionally, catalyzes the aldol cleavage of 4-hydroxy-4-methyl-2-oxoglutarate (HMG) into 2 molecules of pyruvate. Also contains a secondary oxaloacetate (OAA) decarboxylase activity due to the common pyruvate enolate transition state formed following C-C bond cleavage in the retro-aldol and decarboxylation reactions. The polypeptide is Putative 4-hydroxy-4-methyl-2-oxoglutarate aldolase (Cupriavidus necator (strain ATCC 17699 / DSM 428 / KCTC 22496 / NCIMB 10442 / H16 / Stanier 337) (Ralstonia eutropha)).